Consider the following 139-residue polypeptide: uncharacterized protein (139 aa).

The HTH asnC-type domain occupies 1 to 62 (MDDTDLQILS…NICYEKLNKH (62 aa)). Positions 20-39 (MVELGKLVGLSSPSAAERVR) form a DNA-binding region, H-T-H motif.

This is an uncharacterized protein from Bacillus subtilis (strain 168).